The primary structure comprises 299 residues: S-methyl-5'-thioadenosine phosphorylase (299 aa).

Phosphate is bound by residues serine 14, 56–57 (RH), and 89–90 (SA). Methionine 191 serves as a coordination point for substrate. Threonine 192 serves as a coordination point for phosphate. Position 215–217 (215–217 (DYD)) interacts with substrate.

Belongs to the PNP/MTAP phosphorylase family. MTAP subfamily. Homohexamer. Dimer of a homotrimer.

The enzyme catalyses S-methyl-5'-thioadenosine + phosphate = 5-(methylsulfanyl)-alpha-D-ribose 1-phosphate + adenine. It participates in amino-acid biosynthesis; L-methionine biosynthesis via salvage pathway; S-methyl-5-thio-alpha-D-ribose 1-phosphate from S-methyl-5'-thioadenosine (phosphorylase route): step 1/1. Functionally, catalyzes the reversible phosphorylation of S-methyl-5'-thioadenosine (MTA) to adenine and 5-methylthioribose-1-phosphate. Involved in the breakdown of MTA, a major by-product of polyamine biosynthesis. Responsible for the first step in the methionine salvage pathway after MTA has been generated from S-adenosylmethionine. Has broad substrate specificity with 6-aminopurine nucleosides as preferred substrates. The chain is S-methyl-5'-thioadenosine phosphorylase from Gloeobacter violaceus (strain ATCC 29082 / PCC 7421).